Here is a 456-residue protein sequence, read N- to C-terminus: Serine--tRNA ligase (456 aa).

Disordered stretches follow at residues 107–130 (PHSS…GTPP) and 229–253 (FLEN…QDDD). The span at 114–125 (GRSESDNREVRR) shows a compositional bias: basic and acidic residues. Residues 239–248 (LPSNSNSPQG) show a composition bias toward polar residues. L-serine is bound at residue 260 to 262 (TSE). 291–293 (RSE) serves as a coordination point for ATP. Residue E314 coordinates L-serine. An ATP-binding site is contributed by 378–381 (EISS). S413 lines the L-serine pocket.

It belongs to the class-II aminoacyl-tRNA synthetase family. Type-1 seryl-tRNA synthetase subfamily. Homodimer. The tRNA molecule binds across the dimer.

The protein resides in the cytoplasm. The enzyme catalyses tRNA(Ser) + L-serine + ATP = L-seryl-tRNA(Ser) + AMP + diphosphate + H(+). The catalysed reaction is tRNA(Sec) + L-serine + ATP = L-seryl-tRNA(Sec) + AMP + diphosphate + H(+). It participates in aminoacyl-tRNA biosynthesis; selenocysteinyl-tRNA(Sec) biosynthesis; L-seryl-tRNA(Sec) from L-serine and tRNA(Sec): step 1/1. Its function is as follows. Catalyzes the attachment of serine to tRNA(Ser). Is also able to aminoacylate tRNA(Sec) with serine, to form the misacylated tRNA L-seryl-tRNA(Sec), which will be further converted into selenocysteinyl-tRNA(Sec). This chain is Serine--tRNA ligase, found in Nitrosospira multiformis (strain ATCC 25196 / NCIMB 11849 / C 71).